Reading from the N-terminus, the 317-residue chain is MKETNFGEKTRVLVVGGTGSLGRRIVSACLAEGHETYVLQRPEIGVDIEKVQLLLSFKRLGAHLVEGSFSDHQSLVSAVKQVDVVVSAMSGVHFRTHNIPVQLKLVAAIKEAGNVKRFLPSEFGMDPSRMGHAMPPGSETFDQKMEIRNAIKAAGISHTYLVGACFAAYFGGNLSQMGTLFPPKNKVDIYGDGNVKVVFVDEDDMAKYTAKTLNDPRTLNKTVYVRPTDNILTQMELVQIWEKLTEKELEKTYVSGNDFLADIEDKEISHQAGLGHFYHIYYEGCLTDHEVGDDEEATKLYPDVKYKRMDEYLKIFV.

10 residues coordinate NADP(+): Thr18, Ser20, Leu21, Arg41, Lys50, Ser90, Gly91, Arg95, Asn98, and Ser121. Residue Met125 participates in (-)-pinoresinol binding. 2 residues coordinate NADP(+): Lys144 and Phe166. The Proton acceptor role is filled by Lys144. Gly178 is a (-)-pinoresinol binding site.

This sequence belongs to the NmrA-type oxidoreductase family. Isoflavone reductase subfamily. As to quaternary structure, forms homodimers. Expressed in roots. Detected in stems.

The enzyme catalyses (-)-lariciresinol + NADP(+) = (-)-pinoresinol + NADPH + H(+). Its function is as follows. Reductase involved in lignan biosynthesis. Unlike conventional pinoresinol reductases that can reduce both pinoresinol and lariciresinol, PRR2 shows a strict substrate selectivity for (-)-pinoresinol. No activity with (+)-pinoresinol or lariciresinol. Abstracts the 4R-hydride from the NADPH cofactor during catalysis. This Arabidopsis thaliana (Mouse-ear cress) protein is Pinoresinol reductase 2.